Reading from the N-terminus, the 354-residue chain is Cellular communication network factor 6 (354 aa).

The first 23 residues, 1–23 (MRRLLFCTLLMTGLTQLCCRTQG), serve as a signal peptide directing secretion. The region spanning 44-117 (RTEVCRWPCR…RYETGVCAYL (74 aa)) is the IGFBP N-terminal domain. Cystine bridges form between Cys-48-Cys-72, Cys-52-Cys-74, Cys-54-Cys-75, Cys-61-Cys-78, Cys-86-Cys-100, Cys-92-Cys-114, Cys-209-Cys-238, Cys-219-Cys-223, Cys-247-Cys-252, Cys-268-Cys-305, Cys-285-Cys-319, Cys-296-Cys-335, and Cys-299-Cys-337. The TSP type-1 domain occupies 208-253 (KCLVQATKWTPCSRTCGMGISNRVTNDNANCEMRKERRLCYIQPCS). Residues 268–342 (CQPTFQLPKA…TSCVCQRDCR (75 aa)) form the CTCK domain. A glycan (N-linked (GlcNAc...) asparagine) is linked at Asn-308.

This sequence belongs to the CCN family.

The protein localises to the secreted. It is found in the mitochondrion. Functionally, plays a role in mitochondrial electron transport and mitochondrial respiration. This Mus musculus (Mouse) protein is Cellular communication network factor 6.